A 126-amino-acid chain; its full sequence is Alpha-lactalbumin (126 aa).

Positions 1–126 constitute a C-type lysozyme domain; that stretch reads RIFQICELSR…CNSDLDQWKC (126 aa). 4 disulfide bridges follow: cysteine 6–cysteine 126, cysteine 30–cysteine 117, cysteine 63–cysteine 82, and cysteine 78–cysteine 96. N-linked (GlcNAc...) asparagine glycosylation is present at asparagine 47. Positions 84, 87, 89, 92, and 93 each coordinate Ca(2+).

The protein belongs to the glycosyl hydrolase 22 family. In terms of assembly, lactose synthase (LS) is a heterodimer of a catalytic component, beta1,4-galactosyltransferase (beta4Gal-T1) and a regulatory component, alpha-lactalbumin (LA). Mammary gland specific. Secreted in milk.

The protein localises to the secreted. Regulatory subunit of lactose synthase, changes the substrate specificity of galactosyltransferase in the mammary gland making glucose a good acceptor substrate for this enzyme. This enables LS to synthesize lactose, the major carbohydrate component of milk. In other tissues, galactosyltransferase transfers galactose onto the N-acetylglucosamine of the oligosaccharide chains in glycoproteins. This is Alpha-lactalbumin (LALBA) from Ornithorhynchus anatinus (Duckbill platypus).